The sequence spans 317 residues: Protein phosphatase 1 regulatory subunit 3C-B (317 aa).

The CBM21 domain occupies Arg-150–Val-258.

Interacts with PPP1CC catalytic subunit of PP1 and associates with glycogen. Forms complexes with glycogen phosphorylase, glycogen synthase and phosphorylase kinase which is necessary for its regulation of PP1 activity.

In terms of biological role, acts as a glycogen-targeting subunit for PP1 and regulates its activity. Activates glycogen synthase, reduces glycogen phosphorylase activity and limits glycogen breakdown. This Danio rerio (Zebrafish) protein is Protein phosphatase 1 regulatory subunit 3C-B (ppp1r3cb).